Reading from the N-terminus, the 333-residue chain is MIRWGLIGASTIAREWVIGAIRAAGGEVVSVMSSSAERGEAYAAENGIAKAVTSVDDLVGDPDVDAVYISTTNELHHGQALAAIRAGKHVLCEKPLAMNLNDGCEMVLKACEAGVVLGTNHHLRNAATHRAMREAIAAGRIGRPIAARVFHAVYLPPHLQGWRLDKPEAGGGVILDITVHDADTLRFVLNDDPIEAVAISHSAGMGKEGLEDGVMGVLRFRSGVIAQFHDAFTTKFAETGLEVHGTAGSLIGRNVMTQRPVGTVVLRNEEGESELPLDHRNLYETAIAAFHSAIGGNGRPSASGEDGVWSLATGLAVVKAAATGGAVEIETGL.

NADP(+) is bound by residues 9 to 12 (ASTI), 33 to 34 (SS), Arg38, 71 to 76 (TTNELH), 93 to 94 (EK), Asn120, 162 to 163 (WR), and Tyr283.

The protein belongs to the Gfo/Idh/MocA family. In terms of assembly, monomer.

The catalysed reaction is 1,5-anhydro-D-mannitol + NADP(+) = 1,5-anhydro-D-fructose + NADPH + H(+). Functionally, catalyzes the NADPH-specific reduction of 1,5-anhydro-D-fructose to 1,5-anhydro-D-mannitol. This is 1,5-anhydro-D-fructose reductase (afr) from Rhizobium meliloti (strain 1021) (Ensifer meliloti).